The primary structure comprises 326 residues: MSIEIFLVLVVALIIDRLVGDPDWLWERLTHPVVFFGKAIGVFDEALNRGADGGWLKMRGVATILILLAASILLGVVLNRLFDVLGAVGFILEAITVAVFLAQKSLADHVRRVADGLRSNGLEGGREAVSMIVGRDPKTLDEPGVCRAAIESLAENFSDGVVAPALWYAVAGLPGLLAYKMLNTADSMIGHKSPKYLHFGWASARLDDLANLPAARLSVFLIAAGARFKRGVEAAKAAIDVAKRDHGFHRSPNSGWPEAAMAGALDIQLAGPRVYGGVTVDEPMINGAGRAIATADDIDAAVAVFYRACTTLAAASAVLVLPFLLL.

Transmembrane regions (helical) follow at residues 58–78 (MRGV…GVVL), 81–101 (LFDV…AVFL), 157–177 (FSDG…PGLL), and 304–324 (VFYR…LPFL).

Belongs to the CobD/CbiB family.

The protein localises to the cell membrane. It participates in cofactor biosynthesis; adenosylcobalamin biosynthesis. Converts cobyric acid to cobinamide by the addition of aminopropanol on the F carboxylic group. This chain is Cobalamin biosynthesis protein CobD, found in Sinorhizobium fredii (strain NBRC 101917 / NGR234).